The primary structure comprises 273 residues: Dermonecrotic toxin LdSicTox-alphaIB1bi (273 aa).

H5 is a catalytic residue. The Mg(2+) site is built by E25 and D27. The active-site Nucleophile is H41. 2 cysteine pairs are disulfide-bonded: C45–C51 and C47–C190. D85 lines the Mg(2+) pocket. N250 is a glycosylation site (N-linked (GlcNAc...) asparagine).

This sequence belongs to the arthropod phospholipase D family. Class II subfamily. Mg(2+) serves as cofactor. Expressed by the venom gland.

The protein localises to the secreted. It catalyses the reaction an N-(acyl)-sphingosylphosphocholine = an N-(acyl)-sphingosyl-1,3-cyclic phosphate + choline. The enzyme catalyses an N-(acyl)-sphingosylphosphoethanolamine = an N-(acyl)-sphingosyl-1,3-cyclic phosphate + ethanolamine. The catalysed reaction is a 1-acyl-sn-glycero-3-phosphocholine = a 1-acyl-sn-glycero-2,3-cyclic phosphate + choline. It carries out the reaction a 1-acyl-sn-glycero-3-phosphoethanolamine = a 1-acyl-sn-glycero-2,3-cyclic phosphate + ethanolamine. Its function is as follows. Dermonecrotic toxins cleave the phosphodiester linkage between the phosphate and headgroup of certain phospholipids (sphingolipid and lysolipid substrates), forming an alcohol (often choline) and a cyclic phosphate. This toxin acts on sphingomyelin (SM). It may also act on ceramide phosphoethanolamine (CPE), lysophosphatidylcholine (LPC) and lysophosphatidylethanolamine (LPE), but not on lysophosphatidylserine (LPS), and lysophosphatidylglycerol (LPG). It acts by transphosphatidylation, releasing exclusively cyclic phosphate products as second products. Induces dermonecrosis, hemolysis, increased vascular permeability, edema, inflammatory response, and platelet aggregation. The polypeptide is Dermonecrotic toxin LdSicTox-alphaIB1bi (Loxosceles deserta (Desert recluse spider)).